A 341-amino-acid polypeptide reads, in one-letter code: Anthranilate phosphoribosyltransferase (341 aa).

Residues glycine 83, 86–87 (GD), threonine 91, 93–96 (NIST), 111–119 (KHGNRGVSS), and serine 123 contribute to the 5-phospho-alpha-D-ribose 1-diphosphate site. Glycine 83 lines the anthranilate pocket. Position 95 (serine 95) interacts with Mg(2+). Asparagine 114 serves as a coordination point for anthranilate. Arginine 169 is an anthranilate binding site. Residues aspartate 228 and glutamate 229 each coordinate Mg(2+).

Belongs to the anthranilate phosphoribosyltransferase family. As to quaternary structure, homodimer. Mg(2+) is required as a cofactor.

The catalysed reaction is N-(5-phospho-beta-D-ribosyl)anthranilate + diphosphate = 5-phospho-alpha-D-ribose 1-diphosphate + anthranilate. It functions in the pathway amino-acid biosynthesis; L-tryptophan biosynthesis; L-tryptophan from chorismate: step 2/5. Functionally, catalyzes the transfer of the phosphoribosyl group of 5-phosphorylribose-1-pyrophosphate (PRPP) to anthranilate to yield N-(5'-phosphoribosyl)-anthranilate (PRA). The polypeptide is Anthranilate phosphoribosyltransferase (Cupriavidus necator (strain ATCC 17699 / DSM 428 / KCTC 22496 / NCIMB 10442 / H16 / Stanier 337) (Ralstonia eutropha)).